A 305-amino-acid chain; its full sequence is tRNA-cytidine(32) 2-sulfurtransferase (305 aa).

The disordered stretch occupies residues 1-20 (MTAVLPLPQPLADPAPRDPR). The short motif at 59-64 (SGGKDS) is the PP-loop motif element. [4Fe-4S] cluster-binding residues include Cys-134, Cys-137, and Cys-225. Over residues 282-293 (DAPSDVDPDPSA) the composition is skewed to low complexity. The disordered stretch occupies residues 282 to 305 (DAPSDVDPDPSAWLSASHAPHDSD).

This sequence belongs to the TtcA family. Homodimer. The cofactor is Mg(2+). [4Fe-4S] cluster serves as cofactor.

The protein resides in the cytoplasm. The enzyme catalyses cytidine(32) in tRNA + S-sulfanyl-L-cysteinyl-[cysteine desulfurase] + AH2 + ATP = 2-thiocytidine(32) in tRNA + L-cysteinyl-[cysteine desulfurase] + A + AMP + diphosphate + H(+). It participates in tRNA modification. Catalyzes the ATP-dependent 2-thiolation of cytidine in position 32 of tRNA, to form 2-thiocytidine (s(2)C32). The sulfur atoms are provided by the cysteine/cysteine desulfurase (IscS) system. This chain is tRNA-cytidine(32) 2-sulfurtransferase, found in Xanthomonas euvesicatoria pv. vesicatoria (strain 85-10) (Xanthomonas campestris pv. vesicatoria).